The following is a 241-amino-acid chain: ATP synthase subunit 4, mitochondrial (241 aa).

Residues M1–Y35 constitute a mitochondrion transit peptide.

Belongs to the eukaryotic ATPase B chain family. F-type ATPases have 2 components, CF(1) - the catalytic core - and CF(0) - the membrane proton channel. In yeast, the dimeric form of ATP synthase consists of 17 polypeptides: alpha, beta, gamma, delta, epsilon, 4 (B), 5 (OSCP), 6 (A), 8, 9 (C), d, E (Tim11), f, g, h, i/j and k.

The protein resides in the mitochondrion. It is found in the mitochondrion inner membrane. Functionally, mitochondrial membrane ATP synthase (F(1)F(0) ATP synthase or Complex V) produces ATP from ADP in the presence of a proton gradient across the membrane which is generated by electron transport complexes of the respiratory chain. F-type ATPases consist of two structural domains, F(1) - containing the extramembraneous catalytic core, and F(0) - containing the membrane proton channel, linked together by a central stalk and a peripheral stalk. During catalysis, ATP synthesis in the catalytic domain of F(1) is coupled via a rotary mechanism of the central stalk subunits to proton translocation. Part of the complex F(0) domain and the peripheric stalk, which acts as a stator to hold the catalytic alpha(3)beta(3) subcomplex and subunit a/atp6 static relative to the rotary elements. The chain is ATP synthase subunit 4, mitochondrial (atp-3) from Neurospora crassa (strain ATCC 24698 / 74-OR23-1A / CBS 708.71 / DSM 1257 / FGSC 987).